Here is a 49-residue protein sequence, read N- to C-terminus: Large ribosomal subunit protein bL33A (49 aa).

It belongs to the bacterial ribosomal protein bL33 family.

The sequence is that of Large ribosomal subunit protein bL33A from Geobacillus thermodenitrificans (strain NG80-2).